A 188-amino-acid chain; its full sequence is PRA1 family protein 3 (188 aa).

N-acetylmethionine is present on Met-1. Topologically, residues 1–35 are cytoplasmic; it reads MDVNIAPLRAWDDFFPGSDRFARPDFRDISKWNNR. 2 helical membrane-spanning segments follow: residues 36–56 and 57–77; these read VVSN…MMIS and VVGF…VLVF. The Cytoplasmic segment spans residues 78-93; it reads TGFVWAAHNKDILRRM. A run of 2 helical transmembrane segments spans residues 94–114 and 115–135; these read KKQY…FLIS and LFGG…LMFI. Positions 103-117 are required for homodimer formation and heterodimer formation with ARL6IP1; the sequence is MVVMLASYFLISLFG. Residues 136-188 are Cytoplasmic-facing; it reads HASLRLRNLKNKLENKMEEIGLKRTPMGIVLDALEQQEETITKFSDYISKMKE. The interval 136–188 is targeting to endoplasmic reticulum membrane; it reads HASLRLRNLKNKLENKMEEIGLKRTPMGIVLDALEQQEETITKFSDYISKMKE.

The protein belongs to the PRA1 family. In terms of assembly, homodimer. Heterodimer with ARL6IP1. Forms multimers. Interacts with ARL6. Interacts with prenylated RAB1A and RAB3A. Interacts with SLC1A1/EAAC1. Interacts with RTN2 (via first transmembrane domain). Does not interact with VAMP1, VAMP2 or VAMP3.

It localises to the endoplasmic reticulum membrane. The protein localises to the cell membrane. Its subcellular location is the cytoplasm. The protein resides in the cytoskeleton. Regulates intracellular concentrations of taurine and glutamate. Negatively modulates SLC1A1/EAAC1 glutamate transport activity by decreasing its affinity for glutamate in a PKC activity-dependent manner. Plays a role in the retention of SLC1A1/EAAC1 in the endoplasmic reticulum. The protein is PRA1 family protein 3 (ARL6IP5) of Bos taurus (Bovine).